A 575-amino-acid chain; its full sequence is Septation ring formation regulator EzrA (575 aa).

Residues 1 to 8 (MSNGQLIY) lie on the Extracellular side of the membrane. The chain crosses the membrane as a helical span at residues 9–27 (LMVAIAVILVLAYVVAIFL). Over 28–575 (RKRNEGRLEA…YEKTRETIRF (548 aa)) the chain is Cytoplasmic. Coiled-coil stretches lie at residues 110 to 191 (QIDQ…FVTL), 265 to 301 (LYEAFKKNQENIRQLELDNAEYENGQAQEEINALYDI), 354 to 416 (VRRI…IEKD), and 456 to 526 (TASN…IQEA).

It belongs to the EzrA family.

It localises to the cell membrane. In terms of biological role, negative regulator of FtsZ ring formation; modulates the frequency and position of FtsZ ring formation. Inhibits FtsZ ring formation at polar sites. Interacts either with FtsZ or with one of its binding partners to promote depolymerization. The sequence is that of Septation ring formation regulator EzrA from Streptococcus pneumoniae (strain JJA).